The primary structure comprises 317 residues: Gamma-glutamyl hydrolase (317 aa).

The first 24 residues, 1 to 24 (MANLGYLLCLLGLLLCGLSSPGMS), serve as a signal peptide directing secretion. A Gamma-glutamyl hydrolase domain is found at 25–317 (RPYNHGSERP…SSFQQAYMFD (293 aa)). N-linked (GlcNAc...) (high mannose) asparagine glycosylation occurs at N100. The active-site Nucleophile is C133. N-linked (GlcNAc...) (high mannose) asparagine glycosylation is found at N162 and N188. N202 carries an N-linked (GlcNAc...) asparagine glycan. The active-site Proton donor is the H243. N306 is a glycosylation site (N-linked (GlcNAc...) asparagine).

Belongs to the peptidase C26 family. Homodimer. Isoform I (more expressed than isoform II in all tissues) is highly expressed in salivary gland, followed by kidney, liver, lung, stomach and uterus, and weakly expressed in small intestine, brain and fetal liver. Also expressed at a lower level in thymus, spleen and skeletal muscle. Also expressed in tumors.

The protein localises to the secreted. It is found in the extracellular space. Its subcellular location is the lysosome. It localises to the melanosome. The catalysed reaction is (6S)-5,6,7,8-tetrahydrofolyl-(gamma-L-Glu)(n) + (n-1) H2O = (6S)-5,6,7,8-tetrahydrofolate + (n-1) L-glutamate. Functionally, hydrolyzes the polyglutamate sidechains of pteroylpolyglutamates. Progressively removes gamma-glutamyl residues from pteroylpoly-gamma-glutamate to yield pteroyl-alpha-glutamate (folic acid) and free glutamate. May play an important role in the bioavailability of dietary pteroylpolyglutamates and in the metabolism of pteroylpolyglutamates and antifolates. In Mus musculus (Mouse), this protein is Gamma-glutamyl hydrolase (Ggh).